We begin with the raw amino-acid sequence, 183 residues long: Putative 3-methyladenine DNA glycosylase (183 aa).

The protein belongs to the DNA glycosylase MPG family.

The polypeptide is Putative 3-methyladenine DNA glycosylase (Rickettsia peacockii (strain Rustic)).